The chain runs to 98 residues: Acylphosphatase (98 aa).

Positions 12–98 (TYYVRVRGVV…DKRFERFQQH (87 aa)) constitute an Acylphosphatase-like domain. Catalysis depends on residues Arg-27 and Asn-45.

This sequence belongs to the acylphosphatase family.

It carries out the reaction an acyl phosphate + H2O = a carboxylate + phosphate + H(+). This Burkholderia mallei (strain NCTC 10247) protein is Acylphosphatase (acyP).